Consider the following 1054-residue polypeptide: Proteoglycan 4 (1054 aa).

Positions 1–24 (MGWKILPVCLSLLLPVVLIQQVSS) are cleaved as a signal peptide. SMB domains lie at 26-69 (DLSS…PELS) and 66-108 (PELS…EEVH). Cystine bridges form between C30/C34, C30/C46, C34/C64, C44/C46, C44/C57, C50/C56, C57/C64, C70/C74, C70/C86, C74/C104, C84/C86, C84/C97, C90/C96, and C97/C104. N-linked (GlcNAc...) asparagine glycosylation occurs at N109. The segment covering 110–125 (STSPSSKTAPTPAGAS) has biased composition (low complexity). The tract at residues 110–764 (STSPSSKTAP…PLIPGPPVLF (655 aa)) is disordered. Residue S135 is glycosylated (O-linked (GalNAc...) serine). Residues 162–175 (QESSSSSSSSSSTI) show a composition bias toward low complexity. The span at 188–200 (ELQKNPNVKDNKK) shows a compositional bias: basic and acidic residues. The segment covering 229-238 (TPPPPDPPTT) has biased composition (pro residues). 2 O-linked (GalNAc...) threonine glycosylation sites follow: T237 and T250. Residues 286-295 (TTATNKQSSA) show a composition bias toward low complexity. T301 is a glycosylation site (O-linked (GalNAc...) threonine). S302 carries an O-linked (GalNAc...) serine glycan. Over residues 302 to 318 (SVKETRSAEKTSDKDVE) the composition is skewed to basic and acidic residues. Residue T306 is glycosylated (O-linked (GalNAc...) threonine). O-linked (GalNAc...) serine glycosylation is present at S313. A 1; approximate repeat occupies 317 to 324 (VEPTSTTP). Residues 317–618 (VEPTSTTPKN…TPKKPEPTTT (302 aa)) form a 37 X 8 AA repeats of K-X-P-X-P-T-T-X region. Over residues 319–328 (PTSTTPKNSA) the composition is skewed to polar residues. The 2; approximate repeat unit spans residues 325–332 (KNSAPTTT). Residue S327 is glycosylated (O-linked (GalNAc...) serine). The segment covering 329–339 (PTTTKKPVTTT) has biased composition (low complexity). O-linked (GalNAc...) threonine glycans are attached at residues T330, T338, T354, T362, T369, T377, T378, T385, T386, T393, and T394. A 3; approximate repeat occupies 333 to 340 (KKPVTTTK). The stretch at 349–356 (QEPEPTTA) is one 4; approximate repeat. Copy 5 of the repeat occupies 357–364 (KEPPPTTK). Basic and acidic residues predominate over residues 364-399 (KKPEPTTRKEPEPTTPKEPEPTTPKEPEPTTPKEPE). Residues 365-371 (KPEPTTR) form a 6; approximate repeat. A run of 5 repeats spans residues 372–379 (KEPEPTTP), 380–387 (KEPEPTTP), 388–395 (KEPEPTTP), 396–403 (KEPEPTTP), and 404–411 (KEPPPTTK). Positions 400–426 (PTTPKEPPPTTKKPEPTTPKEPGPTTP) are enriched in pro residues. A 12; approximate repeat occupies 412–418 (KPEPTTP). 8 O-linked (GalNAc...) threonine glycosylation sites follow: T416, T417, T424, T432, T433, T440, T441, and T448. A run of 3 repeats spans residues 419–426 (KEPGPTTP), 427–434 (KEPEPTTT), and 435–442 (KEPEPTTT). The segment covering 427–550 (KEPEPTTTKE…PEPTTPKKPE (124 aa)) has biased composition (basic and acidic residues). The stretch at 443–450 (KEPESTTR) is one 16; approximate repeat. 21 consecutive repeat copies span residues 451–458 (KEPEPTTP), 459–466 (KEPEPTTP), 467–474 (KEPEPTTL), 475–482 (KEPEPTTP), 483–490 (KEPEPTTP), 491–498 (KEPEPTTP), 499–506 (KEPEPTTP), 507–514 (KEPEPTTP), 515–522 (KEPEPTTP), 523–530 (KEPEPTTP), 531–538 (KEPEPTTP), 539–546 (KEPEPTTP), 547–554 (KKPEPTTP), 555–562 (KEPVPTTP), 563–570 (KEPEPTTP), 571–578 (KEPEPTTP), 579–586 (KEPEPTTR), 587–594 (KEPEPTTP), 595–602 (KEPEPTTP), 603–610 (KEPEPTTP), and 611–618 (KKPEPTTT). 14 O-linked (GalNAc...) threonine glycosylation sites follow: T472, T480, T481, T488, T489, T496, T497, T504, T505, T512, T520, T521, T528, and T529. The segment covering 551-562 (PTTPKEPVPTTP) has biased composition (pro residues). O-linked (GalNAc...) threonine glycans are attached at residues T553, T560, T561, T568, T569, T576, and T577. The span at 563–614 (KEPEPTTPKEPEPTTPKEPEPTTRKEPEPTTPKEPEPTTPKEPEPTTPKKPE) shows a compositional bias: basic and acidic residues. T592, T600, and T601 each carry an O-linked (GalNAc...) threonine glycan. Residues 615–624 (PTTTSPKTTT) show a composition bias toward low complexity. 5 O-linked (GalNAc...) threonine glycosylation sites follow: T622, T624, T628, T629, and T692. Over residues 672–699 (KPTKKPTKAPKKPTSTKKPKTPKTRKPK) the composition is skewed to basic residues. The segment covering 700 to 712 (TTPSPLKTTSATP) has biased composition (low complexity). Positions 713–735 (ELNTTPLEVMLPTTTIPKQTPNP) are enriched in polar residues. An intrachain disulfide couples C795 to C1053. Hemopexin repeat units follow at residues 797-840 (GKPV…VWGI) and 841-888 (PSPI…FGGL). An N-linked (GlcNAc...) asparagine glycan is attached at N808. A glycan (O-linked (GalNAc...) threonine) is linked at T810. N938 carries N-linked (GlcNAc...) asparagine glycosylation.

Homodimer; disulfide-linked. Post-translationally, N-glycosylated. In terms of processing, O-glycosylated; contains glycosaminoglycan chondroitin sulfate and keratan sulfate. O-glycosylated with sialylated oligosaccharides which are predominantly represented by the monosialylated core type I structure, NeuNAcalpha2-3Galbeta1-3GalNAc, with smaller amounts of disialylated O-glycans. The disulfide bond between Cys-795 and Cys-1053 is essential for protein cleavage. Post-translationally, proteolytically cleaved by cathepsin CTSG. In terms of tissue distribution, highly expressed in cartilage, bone and liver and weakly expressed in heart, brain and muscle. Expressed in the surface chondrocytes and in synovial intimal cells. Isoform B is expressed in bone, small intestine, muscle, testis, heart, liver and lung. Isoform C and isoform D are widely expressed.

It localises to the secreted. Plays a role in boundary lubrication within articulating joints. Prevents protein deposition onto cartilage from synovial fluid by controlling adhesion-dependent synovial growth and inhibiting the adhesion of synovial cells to the cartilage surface. In Mus musculus (Mouse), this protein is Proteoglycan 4 (Prg4).